A 378-amino-acid polypeptide reads, in one-letter code: Queuine tRNA-ribosyltransferase (378 aa).

D93 acts as the Proton acceptor in catalysis. Substrate contacts are provided by residues D93–F97, D147, Q189, and G216. Residues G247–E253 form an RNA binding region. The active-site Nucleophile is D266. Residues T271–R275 are RNA binding; important for wobble base 34 recognition. Zn(2+) contacts are provided by C308, C310, C313, and H339.

This sequence belongs to the queuine tRNA-ribosyltransferase family. Homodimer. Within each dimer, one monomer is responsible for RNA recognition and catalysis, while the other monomer binds to the replacement base PreQ1. Requires Zn(2+) as cofactor.

It catalyses the reaction 7-aminomethyl-7-carbaguanine + guanosine(34) in tRNA = 7-aminomethyl-7-carbaguanosine(34) in tRNA + guanine. It functions in the pathway tRNA modification; tRNA-queuosine biosynthesis. Functionally, catalyzes the base-exchange of a guanine (G) residue with the queuine precursor 7-aminomethyl-7-deazaguanine (PreQ1) at position 34 (anticodon wobble position) in tRNAs with GU(N) anticodons (tRNA-Asp, -Asn, -His and -Tyr). Catalysis occurs through a double-displacement mechanism. The nucleophile active site attacks the C1' of nucleotide 34 to detach the guanine base from the RNA, forming a covalent enzyme-RNA intermediate. The proton acceptor active site deprotonates the incoming PreQ1, allowing a nucleophilic attack on the C1' of the ribose to form the product. After dissociation, two additional enzymatic reactions on the tRNA convert PreQ1 to queuine (Q), resulting in the hypermodified nucleoside queuosine (7-(((4,5-cis-dihydroxy-2-cyclopenten-1-yl)amino)methyl)-7-deazaguanosine). The sequence is that of Queuine tRNA-ribosyltransferase from Gloeobacter violaceus (strain ATCC 29082 / PCC 7421).